Here is a 351-residue protein sequence, read N- to C-terminus: Transaldolase (351 aa).

Residue lysine 138 is the Schiff-base intermediate with substrate of the active site.

This sequence belongs to the transaldolase family. Type 2 subfamily.

Its subcellular location is the cytoplasm. It carries out the reaction D-sedoheptulose 7-phosphate + D-glyceraldehyde 3-phosphate = D-erythrose 4-phosphate + beta-D-fructose 6-phosphate. Its pathway is carbohydrate degradation; pentose phosphate pathway; D-glyceraldehyde 3-phosphate and beta-D-fructose 6-phosphate from D-ribose 5-phosphate and D-xylulose 5-phosphate (non-oxidative stage): step 2/3. Its function is as follows. Transaldolase is important for the balance of metabolites in the pentose-phosphate pathway. The chain is Transaldolase (tal) from Neisseria meningitidis serogroup A / serotype 4A (strain DSM 15465 / Z2491).